The following is a 148-amino-acid chain: MIRRRKKVRKLRGSHTHGWGCKKKHRGGGSKGGRGMAGTGKRKDQKWTWTIKYAPDRLGKRGFHRPKAVQYIPKVINLNDIDENFELFKDAGIIYEEDGKLVFDATALGVDKILGTGKLTRALVVKAYYVTPKAEEKIKAAGGEVLLA.

Positions 1-28 (MIRRRKKVRKLRGSHTHGWGCKKKHRGG) are enriched in basic residues. The disordered stretch occupies residues 1–43 (MIRRRKKVRKLRGSHTHGWGCKKKHRGGGSKGGRGMAGTGKRK). Gly residues predominate over residues 29-38 (GSKGGRGMAG).

Belongs to the universal ribosomal protein uL15 family. Part of the 50S ribosomal subunit.

In terms of biological role, binds to the 23S rRNA. The sequence is that of Large ribosomal subunit protein uL15 from Thermococcus kodakarensis (strain ATCC BAA-918 / JCM 12380 / KOD1) (Pyrococcus kodakaraensis (strain KOD1)).